The following is a 610-amino-acid chain: ESX-5 secretion system protein EccA5 (610 aa).

ATP is bound at residue 357–364 (GPPGTGKT).

Belongs to the CbxX/CfxQ family. As to quaternary structure, part of the ESX-5 / type VII secretion system (T7SS), which is composed of cytosolic and membrane components.

It localises to the cytoplasm. Part of an ESX-5 / type VII specialized secretion system (T7SS), which exports several proteins. EccA5 exhibits ATPase activity and may provide energy for the export of ESX-5 substrates. This chain is ESX-5 secretion system protein EccA5, found in Mycobacterium bovis (strain ATCC BAA-935 / AF2122/97).